A 464-amino-acid chain; its full sequence is 3-isopropylmalate dehydratase large subunit (464 aa).

[4Fe-4S] cluster contacts are provided by Cys-337, Cys-397, and Cys-400.

Belongs to the aconitase/IPM isomerase family. LeuC type 1 subfamily. In terms of assembly, heterodimer of LeuC and LeuD. [4Fe-4S] cluster serves as cofactor.

It carries out the reaction (2R,3S)-3-isopropylmalate = (2S)-2-isopropylmalate. It functions in the pathway amino-acid biosynthesis; L-leucine biosynthesis; L-leucine from 3-methyl-2-oxobutanoate: step 2/4. In terms of biological role, catalyzes the isomerization between 2-isopropylmalate and 3-isopropylmalate, via the formation of 2-isopropylmaleate. This is 3-isopropylmalate dehydratase large subunit from Bacillus cereus (strain ZK / E33L).